Here is a 162-residue protein sequence, read N- to C-terminus: tRNA-specific adenosine deaminase (162 aa).

The 113-residue stretch at 3–115 folds into the CMP/dCMP-type deaminase domain; sequence DSDKYFMKCA…KNLQKYICCK (113 aa). His-54 serves as a coordination point for Zn(2+). Residue Glu-56 is the Proton donor of the active site. Residues Cys-84 and Cys-87 each contribute to the Zn(2+) site.

It belongs to the cytidine and deoxycytidylate deaminase family. In terms of assembly, homodimer. Zn(2+) serves as cofactor.

The catalysed reaction is adenosine(34) in tRNA + H2O + H(+) = inosine(34) in tRNA + NH4(+). Its function is as follows. Catalyzes the deamination of adenosine to inosine at the wobble position 34 of tRNA(Arg2). The protein is tRNA-specific adenosine deaminase of Buchnera aphidicola subsp. Baizongia pistaciae (strain Bp).